Consider the following 252-residue polypeptide: Imidazole glycerol phosphate synthase subunit HisF (252 aa).

Active-site residues include Asp-11 and Asp-130.

The protein belongs to the HisA/HisF family. Heterodimer of HisH and HisF.

It localises to the cytoplasm. The enzyme catalyses 5-[(5-phospho-1-deoxy-D-ribulos-1-ylimino)methylamino]-1-(5-phospho-beta-D-ribosyl)imidazole-4-carboxamide + L-glutamine = D-erythro-1-(imidazol-4-yl)glycerol 3-phosphate + 5-amino-1-(5-phospho-beta-D-ribosyl)imidazole-4-carboxamide + L-glutamate + H(+). It functions in the pathway amino-acid biosynthesis; L-histidine biosynthesis; L-histidine from 5-phospho-alpha-D-ribose 1-diphosphate: step 5/9. Functionally, IGPS catalyzes the conversion of PRFAR and glutamine to IGP, AICAR and glutamate. The HisF subunit catalyzes the cyclization activity that produces IGP and AICAR from PRFAR using the ammonia provided by the HisH subunit. This is Imidazole glycerol phosphate synthase subunit HisF from Bacillus licheniformis (strain ATCC 14580 / DSM 13 / JCM 2505 / CCUG 7422 / NBRC 12200 / NCIMB 9375 / NCTC 10341 / NRRL NRS-1264 / Gibson 46).